Consider the following 205-residue polypeptide: Large ribosomal subunit protein bL21m (205 aa).

The transit peptide at 1–39 directs the protein to the mitochondrion; the sequence is MAASSLTVTLGRLASACSHSILRPSGPGAASLWSASRRF.

It belongs to the bacterial ribosomal protein bL21 family. In terms of assembly, component of the mitochondrial large ribosomal subunit (mt-LSU). Mature mammalian 55S mitochondrial ribosomes consist of a small (28S) and a large (39S) subunit. The 28S small subunit contains a 12S ribosomal RNA (12S mt-rRNA) and 30 different proteins. The 39S large subunit contains a 16S rRNA (16S mt-rRNA), a copy of mitochondrial valine transfer RNA (mt-tRNA(Val)), which plays an integral structural role, and 52 different proteins.

The protein localises to the mitochondrion. The polypeptide is Large ribosomal subunit protein bL21m (MRPL21) (Homo sapiens (Human)).